Here is a 180-residue protein sequence, read N- to C-terminus: Large ribosomal subunit protein uL5 (180 aa).

This sequence belongs to the universal ribosomal protein uL5 family. As to quaternary structure, part of the 50S ribosomal subunit; part of the 5S rRNA/L5/L18/L25 subcomplex. Contacts the 5S rRNA and the P site tRNA. Forms a bridge to the 30S subunit in the 70S ribosome.

Its function is as follows. This is one of the proteins that bind and probably mediate the attachment of the 5S RNA into the large ribosomal subunit, where it forms part of the central protuberance. In the 70S ribosome it contacts protein S13 of the 30S subunit (bridge B1b), connecting the 2 subunits; this bridge is implicated in subunit movement. Contacts the P site tRNA; the 5S rRNA and some of its associated proteins might help stabilize positioning of ribosome-bound tRNAs. This Polynucleobacter necessarius subsp. necessarius (strain STIR1) protein is Large ribosomal subunit protein uL5.